A 69-amino-acid chain; its full sequence is uncharacterized protein (69 aa).

At 1 to 15 (MLLYIVIIVACIISK) the chain is on the cytoplasmic side. Residues 16–36 (LVPNEYWAIHLFFIIMIFMVY) form a helical membrane-spanning segment. Over 37–69 (MYKKLDIHQKYQFWNYTMSGLSGHNVQVTCKCY) the chain is Extracellular. N51 carries N-linked (GlcNAc...) asparagine; by host glycosylation.

Belongs to the asfivirus X69R family.

It is found in the host membrane. This is an uncharacterized protein from African swine fever virus (isolate Tick/Malawi/Lil 20-1/1983) (ASFV).